A 324-amino-acid chain; its full sequence is Polycomb complex protein BMI-1 (324 aa).

The RING-type zinc-finger motif lies at 18 to 57 (CVLCGGYFIDATTIIECLHSFCKTCIVRYLETSKYCPICD). Residues 81-95 (KLVPGLFKNEMKRRR) carry the Nuclear localization signal motif. Residues 160 to 180 (RYLRCPAAMTVMHLRKFLRSK) are interaction with PHC2. Residues 162–226 (LRCPAAMTVM…GPLPLKYRVR (65 aa)) are interaction with E4F1. The interval 232–324 (MKMSHQRDGL…LNGSSATSSG (93 aa)) is disordered. Positions 264 to 276 (PSTSSCLPSPSTP) are enriched in low complexity. Polar residues predominate over residues 277–307 (VQSPHPQFPHISSTMNGTSNSPSANHQSSFA). The segment covering 313-324 (SSLNGSSATSSG) has biased composition (low complexity).

In terms of assembly, component of a PRC1-like complex. Identified in a PRC1-like HPRC-H complex with CBX2, CBX4, CBX8, PHC1, PHC2, PHC3, RING1 and RNF2. Interacts with RNF2/RING2. Interacts with RING1. Part of a complex that contains RNF2, UB2D3 and BMI1, where RNF2 and BMI1 form a tight heterodimer, and UB2D3 interacts only with RNF2. The complex composed of RNF2, UB2D3 and BMI1 binds nucleosomes, and has activity only with nucleosomal histone H2A. Interacts with CBX7 and CBX8. Interacts with SPOP. Part of a complex consisting of BMI1, CUL3 and SPOP. Interacts with E4F1. Interacts with PHC2. Interacts with zinc finger protein ZNF277. May be part of a complex including at least ZNF277, BMI1 and RNF2/RING2. Post-translationally, may be polyubiquitinated; which does not lead to proteasomal degradation. Monoubiquitinated. As to expression, detected in most organs with high expression levels in thymus, heart, brain and testis.

The protein localises to the nucleus. It is found in the cytoplasm. Functionally, component of a Polycomb group (PcG) multiprotein PRC1-like complex, a complex class required to maintain the transcriptionally repressive state of many genes, including Hox genes, throughout development. PcG PRC1 complex acts via chromatin remodeling and modification of histones; it mediates monoubiquitination of histone H2A 'Lys-119', rendering chromatin heritably changed in its expressibility. The complex composed of RNF2, UB2D3 and BMI1 binds nucleosomes, and has activity only with nucleosomal histone H2A. In the PRC1-like complex, regulates the E3 ubiquitin-protein ligase activity of RNF2/RING2. In Mus musculus (Mouse), this protein is Polycomb complex protein BMI-1 (Bmi1).